The sequence spans 318 residues: NADH-ubiquinone oxidoreductase chain 1 (318 aa).

8 consecutive transmembrane segments (helical) span residues 2 to 22 (FMINILMLIIPILLAGAFLTL), 70 to 90 (MFILAPILALGLALTMWIPLP), 100 to 120 (LGVLFMLAMSSLAVYSILWSG), 147 to 167 (AIILLSVLLMSGSFTLSTLII), 172 to 192 (TWLILPAWPLAMMWFISTLAE), 222 to 242 (LFFMAEYANIIMMNMFTAILF), 253 to 273 (ELYTINFIIKSLLLTMLFLWI), and 294 to 314 (LPLTLALCMWHVSLPILTSGI).

The protein belongs to the complex I subunit 1 family. Core subunit of respiratory chain NADH dehydrogenase (Complex I) which is composed of 45 different subunits.

It localises to the mitochondrion inner membrane. It catalyses the reaction a ubiquinone + NADH + 5 H(+)(in) = a ubiquinol + NAD(+) + 4 H(+)(out). Its function is as follows. Core subunit of the mitochondrial membrane respiratory chain NADH dehydrogenase (Complex I) which catalyzes electron transfer from NADH through the respiratory chain, using ubiquinone as an electron acceptor. Essential for the catalytic activity and assembly of complex I. The sequence is that of NADH-ubiquinone oxidoreductase chain 1 (MT-ND1) from Bos mutus grunniens (Wild yak).